A 485-amino-acid chain; its full sequence is Adenosylhomocysteinase (485 aa).

Residues threonine 64, aspartate 139, and glutamate 205 each coordinate substrate. 206 to 208 (TTT) lines the NAD(+) pocket. Residues lysine 235 and aspartate 239 each coordinate substrate. NAD(+) contacts are provided by residues asparagine 240, 269–274 (GYGDVG), glutamate 292, asparagine 327, 348–350 (IGH), and asparagine 397.

The protein belongs to the adenosylhomocysteinase family. As to quaternary structure, homotetramer. NAD(+) is required as a cofactor.

It carries out the reaction S-adenosyl-L-homocysteine + H2O = L-homocysteine + adenosine. It functions in the pathway amino-acid biosynthesis; L-homocysteine biosynthesis; L-homocysteine from S-adenosyl-L-homocysteine: step 1/1. Functionally, adenosylhomocysteine is a competitive inhibitor of S-adenosyl-L-methionine-dependent methyl transferase reactions; therefore adenosylhomocysteinase may play a key role in the control of methylations via regulation of the intracellular concentration of adenosylhomocysteine. The polypeptide is Adenosylhomocysteinase (SAHH) (Triticum aestivum (Wheat)).